Reading from the N-terminus, the 217-residue chain is Thiamine-phosphate synthase (217 aa).

4-amino-2-methyl-5-(diphosphooxymethyl)pyrimidine-binding positions include 45 to 49 and N81; that span reads QFRQK. Mg(2+) contacts are provided by D82 and D101. S120 contributes to the 4-amino-2-methyl-5-(diphosphooxymethyl)pyrimidine binding site. 147 to 149 is a 2-[(2R,5Z)-2-carboxy-4-methylthiazol-5(2H)-ylidene]ethyl phosphate binding site; that stretch reads TPS. Residue K150 coordinates 4-amino-2-methyl-5-(diphosphooxymethyl)pyrimidine. 2-[(2R,5Z)-2-carboxy-4-methylthiazol-5(2H)-ylidene]ethyl phosphate-binding positions include G179 and 197-198; that span reads IS.

Belongs to the thiamine-phosphate synthase family. The cofactor is Mg(2+).

It carries out the reaction 2-[(2R,5Z)-2-carboxy-4-methylthiazol-5(2H)-ylidene]ethyl phosphate + 4-amino-2-methyl-5-(diphosphooxymethyl)pyrimidine + 2 H(+) = thiamine phosphate + CO2 + diphosphate. It catalyses the reaction 2-(2-carboxy-4-methylthiazol-5-yl)ethyl phosphate + 4-amino-2-methyl-5-(diphosphooxymethyl)pyrimidine + 2 H(+) = thiamine phosphate + CO2 + diphosphate. The catalysed reaction is 4-methyl-5-(2-phosphooxyethyl)-thiazole + 4-amino-2-methyl-5-(diphosphooxymethyl)pyrimidine + H(+) = thiamine phosphate + diphosphate. The protein operates within cofactor biosynthesis; thiamine diphosphate biosynthesis; thiamine phosphate from 4-amino-2-methyl-5-diphosphomethylpyrimidine and 4-methyl-5-(2-phosphoethyl)-thiazole: step 1/1. Condenses 4-methyl-5-(beta-hydroxyethyl)thiazole monophosphate (THZ-P) and 2-methyl-4-amino-5-hydroxymethyl pyrimidine pyrophosphate (HMP-PP) to form thiamine monophosphate (TMP). This chain is Thiamine-phosphate synthase, found in Helicobacter pylori (strain J99 / ATCC 700824) (Campylobacter pylori J99).